The chain runs to 55 residues: Large ribosomal subunit protein bL32c (55 aa).

The protein belongs to the bacterial ribosomal protein bL32 family.

It localises to the plastid. The protein resides in the chloroplast. This Nicotiana sylvestris (Wood tobacco) protein is Large ribosomal subunit protein bL32c.